The chain runs to 379 residues: ATP phosphoribosyltransferase regulatory subunit (379 aa).

This sequence belongs to the class-II aminoacyl-tRNA synthetase family. HisZ subfamily. In terms of assembly, heteromultimer composed of HisG and HisZ subunits.

The protein resides in the cytoplasm. It functions in the pathway amino-acid biosynthesis; L-histidine biosynthesis; L-histidine from 5-phospho-alpha-D-ribose 1-diphosphate: step 1/9. Functionally, required for the first step of histidine biosynthesis. May allow the feedback regulation of ATP phosphoribosyltransferase activity by histidine. This Paramagnetospirillum magneticum (strain ATCC 700264 / AMB-1) (Magnetospirillum magneticum) protein is ATP phosphoribosyltransferase regulatory subunit.